We begin with the raw amino-acid sequence, 555 residues long: Urocanate hydratase (555 aa).

NAD(+) contacts are provided by residues 52 to 53, Gln-130, 176 to 178, Glu-196, Arg-201, 242 to 243, 263 to 267, 273 to 274, and Tyr-322; these read GG, GMG, NA, QTSAH, and YL. Cys-410 is a catalytic residue. Residue Gly-492 coordinates NAD(+).

It belongs to the urocanase family. The cofactor is NAD(+).

It is found in the cytoplasm. It carries out the reaction 4-imidazolone-5-propanoate = trans-urocanate + H2O. It functions in the pathway amino-acid degradation; L-histidine degradation into L-glutamate; N-formimidoyl-L-glutamate from L-histidine: step 2/3. Catalyzes the conversion of urocanate to 4-imidazolone-5-propionate. This is Urocanate hydratase from Shewanella baltica (strain OS185).